A 285-amino-acid chain; its full sequence is Geranyl diphosphate 2-C-methyltransferase (285 aa).

It belongs to the geranyl diphosphate 2-C-methyltransferase family. Requires Mg(2+) as cofactor.

It catalyses the reaction (2E)-geranyl diphosphate + S-adenosyl-L-methionine = (E)-2-methylgeranyl diphosphate + S-adenosyl-L-homocysteine + H(+). Its function is as follows. Catalyzes the SAM-dependent methylation of geranyl diphosphate (GPP) to yield (E)-2-methylgeranyl diphosphate (2-MeGPP). This chain is Geranyl diphosphate 2-C-methyltransferase, found in Saccharopolyspora erythraea (strain ATCC 11635 / DSM 40517 / JCM 4748 / NBRC 13426 / NCIMB 8594 / NRRL 2338).